The following is a 427-amino-acid chain: Glutamate-1-semialdehyde 2,1-aminomutase (427 aa).

Lys-267 is subject to N6-(pyridoxal phosphate)lysine.

The protein belongs to the class-III pyridoxal-phosphate-dependent aminotransferase family. HemL subfamily. Homodimer. The cofactor is pyridoxal 5'-phosphate.

It is found in the cytoplasm. It carries out the reaction (S)-4-amino-5-oxopentanoate = 5-aminolevulinate. Its pathway is porphyrin-containing compound metabolism; protoporphyrin-IX biosynthesis; 5-aminolevulinate from L-glutamyl-tRNA(Glu): step 2/2. This Geotalea uraniireducens (strain Rf4) (Geobacter uraniireducens) protein is Glutamate-1-semialdehyde 2,1-aminomutase.